We begin with the raw amino-acid sequence, 241 residues long: Homeobox protein TGIF2LX (241 aa).

Disordered regions lie at residues Met1–Pro58 and Lys125–Ser207. A compositionally biased stretch (polar residues) spans Glu10–Asp39. Positions Glu48–Asp111 form a DNA-binding region, homeobox; TALE-type.

The protein belongs to the TALE/TGIF homeobox family.

Its subcellular location is the nucleus. In terms of biological role, may have a transcription role in testis. This chain is Homeobox protein TGIF2LX (TGIF2LX), found in Pan troglodytes (Chimpanzee).